The primary structure comprises 726 residues: Dipeptidyl-peptidase 5 (726 aa).

The signal sequence occupies residues 1–19; it reads MAAAKWLIASLAFASSGLA. Asn-96 and Asn-252 each carry an N-linked (GlcNAc...) asparagine glycan. The disordered stretch occupies residues 269 to 291; that stretch reads AEPINKRNGPRTPQGIEGASSSP. Catalysis depends on Ser-558, which acts as the Charge relay system. N-linked (GlcNAc...) asparagine glycosylation occurs at Asn-605. Residues Asp-641 and His-673 each act as charge relay system in the active site. N-linked (GlcNAc...) asparagine glycosylation occurs at Asn-699.

This sequence belongs to the peptidase S9C family.

The protein localises to the secreted. In terms of biological role, extracellular dipeptidyl-peptidase which removes N-terminal dipeptides sequentially from polypeptides having unsubstituted N-termini. Contributes to pathogenicity. This is Dipeptidyl-peptidase 5 (DPP5) from Trichophyton tonsurans (Scalp ringworm fungus).